The sequence spans 902 residues: 4-hydroxyphenylacetate decarboxylase glycyl radical subunit (902 aa).

The PFL domain occupies 38–774 (KRAEDLLDVY…ATLATPDGRL (737 aa)). 4-hydroxyphenylacetate-binding residues include S348 and C507. C507 serves as the catalytic Cysteine radical intermediate. E509 functions as the Proton donor in the catalytic mechanism. Residues H540 and E641 each contribute to the 4-hydroxyphenylacetate site. The Glycine radical domain occupies 782 to 902 (GSVSAYAGTD…VIARTEYEGV (121 aa)). G877 is modified (glycine radical).

It belongs to the glycyl radical enzyme (GRE) family. HPAD subfamily. In terms of assembly, heterooctamer consisting of 4 large (HpdB) subunits and 4 small (HpdC) subunits, arranged as a tetramer of heterodimers. Also forms a catalytically inactive homodimer. Post-translationally, requires the activating protein CsdA to generate the key active site glycyl radical that is involved in catalysis. Phosphorylated on serine. Phosphorylation may trigger the formation of the active heterooctamers and thereby regulates enzyme activity.

It catalyses the reaction 4-hydroxyphenylacetate + H(+) = 4-methylphenol + CO2. The enzyme catalyses 3,4-dihydroxyphenylacetate + H(+) = 4-methylcatechol + CO2. Its function is as follows. Glycyl radical subunit of the HPA decarboxylase that decarboxylates phenylacetates with a hydroxyl group in the p-position. Active toward 4-hydroxyphenylacetate and 3,4-dihydroxyphenylacetate, forming 4-methylphenol and 4-methylcatechol, respectively. Is likely involved in the catabolism of aromatic amino acids such as tyrosine fermentation. 4-methylphenol (p-cresol) formation provides metabolic toxicity, which allows an active suppression of other microbes and may provide growth advantages for the producers in highly competitive environments. The large subunit is the catalytic subunit that binds the substrate. In Clostridioides difficile (strain 630) (Peptoclostridium difficile), this protein is 4-hydroxyphenylacetate decarboxylase glycyl radical subunit.